The primary structure comprises 331 residues: MITLNNQDQPVPFNNSYPDEYEIAALVFYSCIFIIGLFVNITALWVFSCTTKKRTTVTIYMMNVALVDLIFIMTLPFRMFYYAKDEWPFGEYFCQILGALTVFYPSIALWLLAFISADRYMAIVQPKYAKELKNTCKAVLACVGVWIMTLTTTIPLLLLHKDPDKDSTPATCLKISDIVYLKAVNVLNFTRLTFFFLIPLFIMIGCYLVIIHNLLHGRTSKLKPKVKEKSIRIIITLLVQVLVCFMPFHICFAFLMLGTGENSYSPWGAFTTFLMNLSTCLDVILYYIVSKQFQARVISVMLYRNYLRGMRRKSFRSGSLRSLSNINSEML.

The Extracellular portion of the chain corresponds to Met1–Leu26. Residue Asn14 is glycosylated (N-linked (GlcNAc...) asparagine). Residues Val27–Phe47 traverse the membrane as a helical segment. The Cytoplasmic segment spans residues Ser48 to Thr56. A helical membrane pass occupies residues Val57 to Phe77. At Arg78–Gln95 the chain is on the extracellular side. Cysteines 94 and 172 form a disulfide. A helical transmembrane segment spans residues Ile96 to Ser116. The Cytoplasmic portion of the chain corresponds to Ala117–Ala138. Residues Val139 to Leu159 form a helical membrane-spanning segment. Over His160–Arg191 the chain is Extracellular. The N-linked (GlcNAc...) asparagine glycan is linked to Asn188. A helical membrane pass occupies residues Leu192–His212. At Asn213–Arg232 the chain is on the cytoplasmic side. A helical transmembrane segment spans residues Ile233–Ala253. The Extracellular segment spans residues Phe254 to Gly268. A helical membrane pass occupies residues Ala269–Val289. Over Ser290–Leu331 the chain is Cytoplasmic. Ser322 carries the post-translational modification Phosphoserine.

Belongs to the G-protein coupled receptor 1 family.

It localises to the cell membrane. The protein localises to the cytoplasmic vesicle membrane. G protein-coupled receptor (GPCR) that plays a role in diverse physiological processes particularly within the immune and nervous systems. Becomes active when triggered by various endogenous ligands including endocannabinoid N-arachidonyl glycine (NAGly), delta-9-tetrahydrocannabinol or resolvin D2/RvD2 derived from the omega-3 fatty acid docosahexaenoic acid (DHA). Upon RvD2 binding, facilitates the resolution of inflammation, aiding in tissue repair and homeostasis. Mechanistically, RvD2 ligation initiates Galphas protein coupling, activation of cAMP-PKA signaling pathway and phosphorylation of STAT3, leading to RvD2-stimulated macrophage phagocytosis. Mediates NAGly-induced process of reorganization of actin filaments and induction of acrosomal exocytosis. Activation by N-arachidonoyl glycine (NAGly) can also induce apoptosis in macrophages. Plays a role in homeostasis of CD8+ subsets of intraepithelial lymphocytes (IELs) (CD8alphaalpha and CD8alphabeta IELs) in small intestine by supporting preferential migration of CD8alphaalpha T-cells to intraepithelial compartment over lamina propria compartment, and by mediating their reconstitution into small intestine after bone marrow transplant. Participates also in hypotensive responses, mediating reduction in intraocular and blood pressure. The protein is N-arachidonyl glycine receptor of Macaca fascicularis (Crab-eating macaque).